Reading from the N-terminus, the 118-residue chain is Putative pterin-4-alpha-carbinolamine dehydratase (118 aa).

It belongs to the pterin-4-alpha-carbinolamine dehydratase family.

The catalysed reaction is (4aS,6R)-4a-hydroxy-L-erythro-5,6,7,8-tetrahydrobiopterin = (6R)-L-erythro-6,7-dihydrobiopterin + H2O. The protein is Putative pterin-4-alpha-carbinolamine dehydratase of Pseudomonas putida (strain ATCC 700007 / DSM 6899 / JCM 31910 / BCRC 17059 / LMG 24140 / F1).